A 54-amino-acid polypeptide reads, in one-letter code: Large ribosomal subunit protein bL33 (54 aa).

The protein belongs to the bacterial ribosomal protein bL33 family.

The protein is Large ribosomal subunit protein bL33 of Buchnera aphidicola subsp. Cinara cedri (strain Cc).